A 318-amino-acid chain; its full sequence is Methionyl-tRNA formyltransferase (318 aa).

112–115 (SILP) provides a ligand contact to (6S)-5,6,7,8-tetrahydrofolate.

It belongs to the Fmt family.

It carries out the reaction L-methionyl-tRNA(fMet) + (6R)-10-formyltetrahydrofolate = N-formyl-L-methionyl-tRNA(fMet) + (6S)-5,6,7,8-tetrahydrofolate + H(+). Attaches a formyl group to the free amino group of methionyl-tRNA(fMet). The formyl group appears to play a dual role in the initiator identity of N-formylmethionyl-tRNA by promoting its recognition by IF2 and preventing the misappropriation of this tRNA by the elongation apparatus. This chain is Methionyl-tRNA formyltransferase, found in Haemophilus influenzae (strain PittEE).